We begin with the raw amino-acid sequence, 350 residues long: Beta-hexosaminidase (350 aa).

Substrate-binding positions include Asp-62, Arg-70, Arg-133, and 163 to 164; that span reads KH. The active-site Proton donor/acceptor is the His-176. Asp-248 acts as the Nucleophile in catalysis.

The protein belongs to the glycosyl hydrolase 3 family. NagZ subfamily.

It localises to the cytoplasm. It carries out the reaction Hydrolysis of terminal non-reducing N-acetyl-D-hexosamine residues in N-acetyl-beta-D-hexosaminides.. It participates in cell wall biogenesis; peptidoglycan recycling. Plays a role in peptidoglycan recycling by cleaving the terminal beta-1,4-linked N-acetylglucosamine (GlcNAc) from peptide-linked peptidoglycan fragments, giving rise to free GlcNAc, anhydro-N-acetylmuramic acid and anhydro-N-acetylmuramic acid-linked peptides. In Haemophilus influenzae (strain PittEE), this protein is Beta-hexosaminidase.